The following is a 519-amino-acid chain: MSWAPVSTWSRRTPLAACCSAPELPPAGAWKACAAGSLRIGPQGRCKMMKNWGMIGGIAAALAAGIYVLWGPISDRKKYRKGLVPGLLNLGNTCFMNSLLQGLASCPSFIRWLADFTSKYRQENNTTEHQHLSVTLLHLLKALCNQEGTEDEVLDASPLLEVLRAHRWQISSFEEQDAHELFHVLTSSLEDERDRRPHVTHLFDLDSLEFPLEPQRQIHCRTQVPIYPIPSQWKSQHPFHGRLTSNMVCKHCQHQSPMRYDTFDSLSLSIPVATWGHPITLDQCLQHFISTESVKDVVCENCTKIHAAQIPNSQSVENRKTTFVKQLKLGKLPQCLCIHLQRLSWSNQGSPLKRNEHVQFSEFLAMDRFKYRISGCSTSKQPANHLSAAEQETTDGKEGGAQNPTMPFLNGACSTSYISPPFTSPLPTNPEWTSSSYLFRLMAVVVHHGDMHSGHFVTYRRSPAAKNQKLTSQQWLWISDDTVRRTNFQEVLSSSAYLLFYERIQSNLHHPEDQRAAEK.

Residues M1–W52 lie on the Mitochondrial intermembrane side of the membrane. Residues G53–I73 traverse the membrane as a helical segment. Residues S74–K519 lie on the Cytoplasmic side of the membrane. A USP domain is found at P85–I504. The active-site Nucleophile is the C94. The tract at residues S379 to T405 is disordered. The active-site Proton acceptor is H455.

It belongs to the peptidase C19 family.

The protein localises to the mitochondrion outer membrane. It carries out the reaction Thiol-dependent hydrolysis of ester, thioester, amide, peptide and isopeptide bonds formed by the C-terminal Gly of ubiquitin (a 76-residue protein attached to proteins as an intracellular targeting signal).. Deubiquitinating enzyme that acts as a key inhibitor of mitophagy by counteracting the action of parkin (PRKN). The sequence is that of Ubiquitin carboxyl-terminal hydrolase 30 (usp30) from Xenopus tropicalis (Western clawed frog).